The primary structure comprises 364 residues: MLIFPLINDTSRKIIHIDMDAFFAAVEERDNPALKGKPVVIGKDPRETGGRGVVSTCNYEARKYGIHSAMSSKEAYERCPKAIFISGNYEKYRTVGDQIRRIFKRYTDLVEPMSIDEAYLDVTDNKLGIKSAVKIAKLIQHDIWKEVGLTCSAGVSYNKFLAKLASDFEKPHGLTLVLKEDALCFLAKLPIEKFHGVGKKSVEKLHDMGIYTGQDLLAVPEMTLIDHFGRFGFDLYRKARGISNSPVKSDRIRKSIGSERTYAKLLYQETDIKAEISKNAKRVAALLQDHKKLGKTIVLKVRYADFTTLTKRVTLPELTRNAAQIEQVAGDIFDSLSENPAGIRLLGVTMTNLEDKVADISLDL.

Positions 14–198 constitute a UmuC domain; that stretch reads IIHIDMDAFF…LPIEKFHGVG (185 aa). The Mg(2+) site is built by Asp18 and Asp116. Residue Glu117 is part of the active site.

This sequence belongs to the DNA polymerase type-Y family. As to quaternary structure, monomer. The cofactor is Mg(2+).

The protein localises to the cytoplasm. The enzyme catalyses DNA(n) + a 2'-deoxyribonucleoside 5'-triphosphate = DNA(n+1) + diphosphate. Functionally, poorly processive, error-prone DNA polymerase involved in untargeted mutagenesis. Copies undamaged DNA at stalled replication forks, which arise in vivo from mismatched or misaligned primer ends. These misaligned primers can be extended by PolIV. Exhibits no 3'-5' exonuclease (proofreading) activity. May be involved in translesional synthesis, in conjunction with the beta clamp from PolIII. This chain is DNA polymerase IV, found in Streptococcus pyogenes serotype M18 (strain MGAS8232).